Reading from the N-terminus, the 435-residue chain is Proline--tRNA ligase (435 aa).

Belongs to the class-II aminoacyl-tRNA synthetase family. ProS type 2 subfamily. As to quaternary structure, homodimer.

It is found in the cytoplasm. It carries out the reaction tRNA(Pro) + L-proline + ATP = L-prolyl-tRNA(Pro) + AMP + diphosphate. Its function is as follows. Catalyzes the attachment of proline to tRNA(Pro) in a two-step reaction: proline is first activated by ATP to form Pro-AMP and then transferred to the acceptor end of tRNA(Pro). The sequence is that of Proline--tRNA ligase from Rhodospirillum rubrum (strain ATCC 11170 / ATH 1.1.1 / DSM 467 / LMG 4362 / NCIMB 8255 / S1).